Consider the following 147-residue polypeptide: Large ribosomal subunit protein uL13 (147 aa).

It belongs to the universal ribosomal protein uL13 family. Part of the 50S ribosomal subunit.

This protein is one of the early assembly proteins of the 50S ribosomal subunit, although it is not seen to bind rRNA by itself. It is important during the early stages of 50S assembly. The polypeptide is Large ribosomal subunit protein uL13 (Micrococcus luteus (strain ATCC 4698 / DSM 20030 / JCM 1464 / CCM 169 / CCUG 5858 / IAM 1056 / NBRC 3333 / NCIMB 9278 / NCTC 2665 / VKM Ac-2230) (Micrococcus lysodeikticus)).